Consider the following 569-residue polypeptide: Pyrophosphate--fructose 6-phosphate 1-phosphotransferase subunit beta 2 (569 aa).

Glycine 107 contacts diphosphate. Aspartate 201 provides a ligand contact to Mg(2+). Substrate contacts are provided by residues 229 to 231, 268 to 269, 276 to 278, glutamate 337, and 442 to 445; these read TID, KY, MGR, and YEGR. Aspartate 231 (proton acceptor) is an active-site residue.

It belongs to the phosphofructokinase type A (PFKA) family. PPi-dependent PFK group II subfamily. Clade 'Long' sub-subfamily. As to quaternary structure, tetramer of two alpha (regulatory) and two beta (catalytic) chains. Requires Mg(2+) as cofactor.

The protein resides in the cytoplasm. The catalysed reaction is beta-D-fructose 6-phosphate + diphosphate = beta-D-fructose 1,6-bisphosphate + phosphate + H(+). Its pathway is carbohydrate degradation; glycolysis; D-glyceraldehyde 3-phosphate and glycerone phosphate from D-glucose: step 3/4. Allosterically activated by fructose 2,6-bisphosphate. In terms of biological role, catalytic subunit of pyrophosphate--fructose 6-phosphate 1-phosphotransferase. Catalyzes the phosphorylation of D-fructose 6-phosphate, the first committing step of glycolysis. Uses inorganic phosphate (PPi) as phosphoryl donor instead of ATP like common ATP-dependent phosphofructokinases (ATP-PFKs), which renders the reaction reversible, and can thus function both in glycolysis and gluconeogenesis. The sequence is that of Pyrophosphate--fructose 6-phosphate 1-phosphotransferase subunit beta 2 from Arabidopsis thaliana (Mouse-ear cress).